The following is a 642-amino-acid chain: Serine/threonine-protein kinase pakA (642 aa).

Polar residues-rich tracts occupy residues 1–12 (MSLKKQQQQSDF) and 38–48 (LRQSASFTALN). The interval 1–82 (MSLKKQQQQS…GFGTKPRRKN (82 aa)) is disordered. One can recognise a CRIB domain in the interval 100–113 (ISAPENPVHVTHVG). Disordered stretches follow at residues 180-276 (GEYP…PIPE) and 317-338 (QLDR…RTRQ). Low complexity-rich tracts occupy residues 217–227 (SQSSPVPVLSS) and 254–266 (VVSN…RPAN). The 252-residue stretch at 361–612 (YYNLNKIGQG…AHDLLKHPFM (252 aa)) folds into the Protein kinase domain. ATP contacts are provided by residues 367-375 (IGQGASGGV) and K390. D480 functions as the Proton acceptor in the catalytic mechanism.

Belongs to the protein kinase superfamily. STE Ser/Thr protein kinase family. STE20 subfamily.

It localises to the cytoplasm. The protein localises to the nucleus. It carries out the reaction L-seryl-[protein] + ATP = O-phospho-L-seryl-[protein] + ADP + H(+). It catalyses the reaction L-threonyl-[protein] + ATP = O-phospho-L-threonyl-[protein] + ADP + H(+). Its function is as follows. MAP4K component of the MAPK pathway required for the mating pheromone response and the regulation of cell polarity and cell cycle. This Talaromyces marneffei (Penicillium marneffei) protein is Serine/threonine-protein kinase pakA (pakA).